Here is a 253-residue protein sequence, read N- to C-terminus: Triosephosphate isomerase (253 aa).

Substrate is bound at residue 8–10 (NWK). Residue histidine 93 is the Electrophile of the active site. The Proton acceptor role is filled by glutamate 165. Substrate is bound by residues glycine 171, serine 210, and 231–232 (GG).

It belongs to the triosephosphate isomerase family. Homodimer.

It localises to the cytoplasm. It carries out the reaction D-glyceraldehyde 3-phosphate = dihydroxyacetone phosphate. The protein operates within carbohydrate biosynthesis; gluconeogenesis. It functions in the pathway carbohydrate degradation; glycolysis; D-glyceraldehyde 3-phosphate from glycerone phosphate: step 1/1. Involved in the gluconeogenesis. Catalyzes stereospecifically the conversion of dihydroxyacetone phosphate (DHAP) to D-glyceraldehyde-3-phosphate (G3P). The sequence is that of Triosephosphate isomerase from Francisella philomiragia subsp. philomiragia (strain ATCC 25017 / CCUG 19701 / FSC 153 / O#319-036).